The following is a 316-amino-acid chain: 4-hydroxy-3-methylbut-2-enyl diphosphate reductase (316 aa).

Position 12 (C12) interacts with [4Fe-4S] cluster. Residues H41 and H74 each contribute to the (2E)-4-hydroxy-3-methylbut-2-enyl diphosphate site. 2 residues coordinate dimethylallyl diphosphate: H41 and H74. Residues H41 and H74 each coordinate isopentenyl diphosphate. C96 provides a ligand contact to [4Fe-4S] cluster. (2E)-4-hydroxy-3-methylbut-2-enyl diphosphate is bound at residue H124. Dimethylallyl diphosphate is bound at residue H124. H124 contacts isopentenyl diphosphate. E126 functions as the Proton donor in the catalytic mechanism. T168 contacts (2E)-4-hydroxy-3-methylbut-2-enyl diphosphate. Position 198 (C198) interacts with [4Fe-4S] cluster. Residues S226, S227, N228, and S270 each contribute to the (2E)-4-hydroxy-3-methylbut-2-enyl diphosphate site. 4 residues coordinate dimethylallyl diphosphate: S226, S227, N228, and S270. The isopentenyl diphosphate site is built by S226, S227, N228, and S270.

It belongs to the IspH family. Requires [4Fe-4S] cluster as cofactor.

The catalysed reaction is isopentenyl diphosphate + 2 oxidized [2Fe-2S]-[ferredoxin] + H2O = (2E)-4-hydroxy-3-methylbut-2-enyl diphosphate + 2 reduced [2Fe-2S]-[ferredoxin] + 2 H(+). It catalyses the reaction dimethylallyl diphosphate + 2 oxidized [2Fe-2S]-[ferredoxin] + H2O = (2E)-4-hydroxy-3-methylbut-2-enyl diphosphate + 2 reduced [2Fe-2S]-[ferredoxin] + 2 H(+). It functions in the pathway isoprenoid biosynthesis; dimethylallyl diphosphate biosynthesis; dimethylallyl diphosphate from (2E)-4-hydroxy-3-methylbutenyl diphosphate: step 1/1. Its pathway is isoprenoid biosynthesis; isopentenyl diphosphate biosynthesis via DXP pathway; isopentenyl diphosphate from 1-deoxy-D-xylulose 5-phosphate: step 6/6. Catalyzes the conversion of 1-hydroxy-2-methyl-2-(E)-butenyl 4-diphosphate (HMBPP) into a mixture of isopentenyl diphosphate (IPP) and dimethylallyl diphosphate (DMAPP). Acts in the terminal step of the DOXP/MEP pathway for isoprenoid precursor biosynthesis. The polypeptide is 4-hydroxy-3-methylbut-2-enyl diphosphate reductase (Marinobacter nauticus (strain ATCC 700491 / DSM 11845 / VT8) (Marinobacter aquaeolei)).